The sequence spans 113 residues: MELAQNARMNSLFEFYGALLTAKQHSYLSLYYGDDFSLGEIAEEYQVSRQAVYDNIRRTEKILEGYEAKLHLFQNYEQQNASADALQKYIQAQYPNDQQLAKLLADLLNLTEQ.

This sequence belongs to the UPF0122 family.

In terms of biological role, might take part in the signal recognition particle (SRP) pathway. This is inferred from the conservation of its genetic proximity to ftsY/ffh. May be a regulatory protein. In Latilactobacillus sakei subsp. sakei (strain 23K) (Lactobacillus sakei subsp. sakei), this protein is UPF0122 protein LCA_0713.